A 162-amino-acid chain; its full sequence is uncharacterized protein (162 aa).

The region spanning 6–78 is the HTH asnC-type domain; sequence LDDLDRNILR…ALIVLEVGKP (73 aa). The segment at residues 25–44 is a DNA-binding region (H-T-H motif); sequence ISELSEQLKKPESTIHFRIK.

This is an uncharacterized protein from Pyrococcus furiosus (strain ATCC 43587 / DSM 3638 / JCM 8422 / Vc1).